Consider the following 319-residue polypeptide: Malate dehydrogenase (319 aa).

NAD(+) is bound by residues 11–16 and Asp-36; that span reads GAGNVG. Substrate is bound by residues Arg-85 and Arg-91. Residues Asn-98 and 121-123 contribute to the NAD(+) site; that span reads VSN. 2 residues coordinate substrate: Asn-123 and Arg-154. The active-site Proton acceptor is His-178.

This sequence belongs to the LDH/MDH superfamily. MDH type 3 family.

It catalyses the reaction (S)-malate + NAD(+) = oxaloacetate + NADH + H(+). Catalyzes the reversible oxidation of malate to oxaloacetate. The protein is Malate dehydrogenase of Sulfurimonas denitrificans (strain ATCC 33889 / DSM 1251) (Thiomicrospira denitrificans (strain ATCC 33889 / DSM 1251)).